The sequence spans 126 residues: Holo-[acyl-carrier-protein] synthase (126 aa).

Mg(2+) contacts are provided by Asp-8 and Glu-57.

This sequence belongs to the P-Pant transferase superfamily. AcpS family. Mg(2+) serves as cofactor.

It localises to the cytoplasm. It carries out the reaction apo-[ACP] + CoA = holo-[ACP] + adenosine 3',5'-bisphosphate + H(+). Its function is as follows. Transfers the 4'-phosphopantetheine moiety from coenzyme A to a Ser of acyl-carrier-protein. In Geobacter sulfurreducens (strain ATCC 51573 / DSM 12127 / PCA), this protein is Holo-[acyl-carrier-protein] synthase.